The following is a 289-amino-acid chain: ATP synthase gamma chain (289 aa).

Belongs to the ATPase gamma chain family. F-type ATPases have 2 components, CF(1) - the catalytic core - and CF(0) - the membrane proton channel. CF(1) has five subunits: alpha(3), beta(3), gamma(1), delta(1), epsilon(1). CF(0) has three main subunits: a, b and c.

Its subcellular location is the cell inner membrane. In terms of biological role, produces ATP from ADP in the presence of a proton gradient across the membrane. The gamma chain is believed to be important in regulating ATPase activity and the flow of protons through the CF(0) complex. The polypeptide is ATP synthase gamma chain (Polynucleobacter necessarius subsp. necessarius (strain STIR1)).